The chain runs to 133 residues: Vesicle transport protein GOT1A (133 aa).

Topologically, residues 1–9 (MISITEWQK) are cytoplasmic. The chain crosses the membrane as a helical span at residues 10 to 30 (IGVGITGFGVFFILFGILLYF). A topological domain (lumenal) is located at residue Asp-31. The chain crosses the membrane as a helical span at residues 32-52 (SVLLAFGNLLFLTGLSLIIGL). At 53 to 68 (RRTFAFFFQRHKLKGT) the chain is on the cytoplasmic side. A helical membrane pass occupies residues 69 to 89 (SFFLGGVAIVLLRWPLLGMLL). The Lumenal segment spans residues 90 to 92 (EAY). Residues 93–113 (GFISLFKGFFPVVFGFLGSAF) traverse the membrane as a helical segment. Residues 114 to 133 (NIPFLSTLFQKLQGSSSSMV) are Cytoplasmic-facing.

This sequence belongs to the GOT1 family.

It localises to the golgi apparatus membrane. Its function is as follows. May be involved in fusion of ER-derived transport vesicles with the Golgi complex. This Mus musculus (Mouse) protein is Vesicle transport protein GOT1A.